Here is a 1146-residue protein sequence, read N- to C-terminus: Ankyrin repeat domain-containing protein 24 (1146 aa).

ANK repeat units follow at residues E81–S110, A114–V143, S147–P176, S180–D209, and Q213–I242. Disordered stretches follow at residues R272–R320, R607–A627, and E766–T785. A compositionally biased stretch (polar residues) spans E286–G297. The stretch at R320–E517 forms a coiled coil. Residues A714 to A1110 are a coiled coil.

In terms of assembly, homodimer. Interacts (via C-terminal domain) with TRIOBP (via C-terminal domain) isoform 4; recruits TRIOBP isoform 4 to stereocilia rootlets.

It is found in the cell membrane. The protein resides in the cell projection. Its subcellular location is the stereocilium. Its function is as follows. Component of the stereocilia rootlet in hair cells of inner ear. Bridges the apical plasma membrane with the lower rootlet and maintains normal distribution of TRIOBP, thereby reinforcing stereocilia insertion points and organizing rootlets for hearing with long-term resilience. In Homo sapiens (Human), this protein is Ankyrin repeat domain-containing protein 24.